The chain runs to 933 residues: MNGNLPHIQIQSPKNSLDHLNNGRQATHNFEHGKPGDREEANGHADAHSSSGRSRYLSSDTNLLRDGSSSLDPLSKHIMKRTRSEKTLSFLNPSRASSNTHLSREGTNRSSNVTRTVSGRKSNHGSSLTDTGESDQLSLKSFGAIRQPSQHRSSLFSRMLGSTSHIFGIREDMDNESSEEERDGIPRVEGNAADPFSWIPDGKNVWDSPPKYIRVLSHNKKEKSLDHLFLAQELYCKPTLAATHDRYYEPRATDFPNLAHESSEPSSSRHTADAQSITNASVHLHNSSSPLNRTPSVISDTLAVAITSNSSSNSSNNAIWAMKFSRDGRYLAVGGQDRILRIWAVLDSEHARSVASETCSSDPNNPKLNLKAPVFSEAPIREYAGHTADILDLSWSRNNFLLSSSMDKTARLWHPVRKDCLCCFEHSDFVTSIAFHPKDDRFFLSGSLDCKLRLWSIKEKAVSFWNELPELITAVAFSPDGGLAIAGTFVGLCLFYDTRGLRFRTQMSIRSSRGKNAKGSKVTGIQTRTQMIDNIAGDTEMLVTTNDSRIRIYNLRDKSLELKFKGHANAQSQNRAYFDDDGNYVICGSEDHQVFIWDLPPQHMHKTKKKKHEHFKASVRPITAAVFAPTKTKQLLTLSGDPVYLAAISARRSSVISNASIETGPSLRNLKSLSHSYLPIEIMKGHIIVCGDLDGRIRVFRQDSVFAARKLIEKKNIERKNSETLSNSSFFPQALKAHMNSISSPKRHFSLRHKKNASQITNNENNGNDDIKKGDEPEEEHVGLRKNSTQEKNANLDPNEALKRADMMMLQEGASSMVYYSLTNLDNPGATVNEAAKTAATIEQNEHEIQTSVDPISNVKAILPNADDVSSKNSSTEDQLECLRCGNSLFNVFSRSFVFEGAKFSIVCSHCNRKLLKSGSDDGSETHEMSTLP.

The segment covering 1 to 28 has biased composition (polar residues); that stretch reads MNGNLPHIQIQSPKNSLDHLNNGRQATH. Disordered stretches follow at residues 1 to 135, 173 to 194, and 252 to 275; these read MNGN…GESD, MDNE…NAAD, and ATDF…ADAQ. Residues 29–47 show a composition bias toward basic and acidic residues; sequence NFEHGKPGDREEANGHADA. Over residues 49–59 the composition is skewed to low complexity; that stretch reads SSSGRSRYLSS. Composition is skewed to polar residues over residues 87–101 and 108–135; these read TLSF…SNTH and NRSS…GESD. A compositionally biased stretch (acidic residues) spans 173-182; that stretch reads MDNESSEEER. Residues 264-275 are compositionally biased toward polar residues; that stretch reads EPSSSRHTADAQ. WD repeat units lie at residues 314–353, 385–423, 425–465, 467–506, 517–563, 568–607, 617–657, and 665–710; these read SSNN…HARS, GHTA…CLCC, EHSD…VSFW, ELPE…FRTQ, AKGS…LELK, ANAQ…MHKT, ASVR…SVIS, and PSLR…AARK. Ser-722 carries the phosphoserine modification. Residues 756-796 are disordered; the sequence is NASQITNNENNGNDDIKKGDEPEEEHVGLRKNSTQEKNANL. Residues 757–768 show a composition bias toward polar residues; it reads ASQITNNENNGN. Over residues 769–783 the composition is skewed to basic and acidic residues; the sequence is DDIKKGDEPEEEHVG.

It localises to the endoplasmic reticulum. The protein localises to the nucleus. This is an uncharacterized protein from Schizosaccharomyces pombe (strain 972 / ATCC 24843) (Fission yeast).